Here is a 95-residue protein sequence, read N- to C-terminus: DNA-binding protein CENSYa_1764 (95 aa).

The disordered stretch occupies residues 1-21 (MSYTDPDDSLPEHVPGEAEMS).

This sequence belongs to the PDCD5 family.

This is DNA-binding protein CENSYa_1764 from Cenarchaeum symbiosum (strain A).